The sequence spans 423 residues: Chitinase 1 (423 aa).

Positions 1-22 (MLSFVKKSIALVAALQAVTALA) are cleaved as a signal peptide. Positions 23–34 (TPISSEAGVEKR) are excised as a propeptide. The GH18 domain occupies 38–401 (FANAVYFTNW…STSHQGLGSQ (364 aa)). Chitin is bound by residues 102–103 (GT) and 129–132 (GGWT). Glu-171 acts as the Proton donor in catalysis. Chitin contacts are provided by residues Tyr-172, 237–240 (MAYD), and Trp-378.

This sequence belongs to the glycosyl hydrolase 18 family. Chitinase class V subfamily.

The protein localises to the secreted. The enzyme catalyses Random endo-hydrolysis of N-acetyl-beta-D-glucosaminide (1-&gt;4)-beta-linkages in chitin and chitodextrins.. This is Chitinase 1 (CHI1) from Aphanocladium album (Wheat rust fungus).